The chain runs to 397 residues: Tryptophan synthase beta chain (397 aa).

At Lys88 the chain carries N6-(pyridoxal phosphate)lysine.

The protein belongs to the TrpB family. As to quaternary structure, tetramer of two alpha and two beta chains. Pyridoxal 5'-phosphate is required as a cofactor.

The enzyme catalyses (1S,2R)-1-C-(indol-3-yl)glycerol 3-phosphate + L-serine = D-glyceraldehyde 3-phosphate + L-tryptophan + H2O. Its pathway is amino-acid biosynthesis; L-tryptophan biosynthesis; L-tryptophan from chorismate: step 5/5. The beta subunit is responsible for the synthesis of L-tryptophan from indole and L-serine. The protein is Tryptophan synthase beta chain of Haemophilus influenzae (strain 86-028NP).